The following is a 111-amino-acid chain: Prothymosin alpha (111 aa).

An N-acetylmethionine modification is found at methionine 1. Residues methionine 1–aspartate 111 are disordered. N-acetylserine; in Prothymosin alpha, N-terminally processed is present on serine 2. Residue serine 2 is modified to Phosphoserine. The residue at position 8 (threonine 8) is a Phosphothreonine. 2 positions are modified to phosphoserine: serine 9 and serine 10. Phosphothreonine occurs at positions 13 and 14. Positions threonine 13–arginine 31 are enriched in basic and acidic residues. Lysine 15 carries the N6-acetyllysine; alternate modification. Residue lysine 15 is modified to N6-succinyllysine; alternate. Positions glutamate 43 to glutamate 84 are enriched in acidic residues. Basic and acidic residues predominate over residues aspartate 101 to aspartate 111. The residue at position 102 (threonine 102) is a Phosphothreonine. At lysine 103 the chain carries N6-acetyllysine; alternate. Lysine 103 participates in a covalent cross-link: Glycyl lysine isopeptide (Lys-Gly) (interchain with G-Cter in SUMO2); alternate. Threonine 107 is subject to Phosphothreonine.

It belongs to the pro/parathymosin family. Interacts with NUPR1; regulates apoptotic process. Covalently linked to a small RNA of about 20 nucleotides.

It localises to the nucleus. Prothymosin alpha may mediate immune function by conferring resistance to certain opportunistic infections. This Mus musculus (Mouse) protein is Prothymosin alpha (Ptma).